Reading from the N-terminus, the 220-residue chain is uncharacterized protein (220 aa).

This is an uncharacterized protein from Borreliella burgdorferi (strain ATCC 35210 / DSM 4680 / CIP 102532 / B31) (Borrelia burgdorferi).